A 186-amino-acid chain; its full sequence is UPF0303 protein ZMO1353 (186 aa).

It belongs to the UPF0303 family.

The protein is UPF0303 protein ZMO1353 of Zymomonas mobilis subsp. mobilis (strain ATCC 31821 / ZM4 / CP4).